Consider the following 241-residue polypeptide: Glutathione S-transferase omega-1 (241 aa).

N-acetylserine is present on Ser2. A GST N-terminal domain is found at 22–101 (GLIRVYSMRF…YLDEAYPGKK (80 aa)). The Nucleophile role is filled by Cys32. Residue Lys57 is modified to N6-acetyllysine. Glutathione is bound by residues Lys59, Val72, and 85 to 86 (ES). Residues 106 to 225 (DPYEKACQKM…HIEPRDLRAF (120 aa)) form the GST C-terminal domain. Lys143, Lys148, and Lys152 each carry N6-acetyllysine.

As to quaternary structure, homodimer. Most abundant in the liver and skeletal muscle; also expressed in heart, diaphragm, colon, thymus, kidney, lung, ovaries, spleen, intestine and pancreas.

It localises to the cytoplasm. The protein localises to the cytosol. The enzyme catalyses RX + glutathione = an S-substituted glutathione + a halide anion + H(+). The catalysed reaction is L-dehydroascorbate + 2 glutathione = glutathione disulfide + L-ascorbate. It catalyses the reaction methylarsonate + 2 glutathione + H(+) = methylarsonous acid + glutathione disulfide + H2O. Functionally, exhibits glutathione-dependent thiol transferase and dehydroascorbate reductase activities. Has S-(phenacyl)glutathione reductase activity. Also has glutathione S-transferase activity. Participates in the biotransformation of inorganic arsenic and reduces monomethylarsonic acid (MMA) and dimethylarsonic acid. The polypeptide is Glutathione S-transferase omega-1 (GSTO1) (Sus scrofa (Pig)).